A 284-amino-acid polypeptide reads, in one-letter code: Bifunctional protein FolD (284 aa).

NADP(+) is bound by residues 166–168 (GAS), serine 191, and isoleucine 232.

It belongs to the tetrahydrofolate dehydrogenase/cyclohydrolase family. As to quaternary structure, homodimer.

The catalysed reaction is (6R)-5,10-methylene-5,6,7,8-tetrahydrofolate + NADP(+) = (6R)-5,10-methenyltetrahydrofolate + NADPH. The enzyme catalyses (6R)-5,10-methenyltetrahydrofolate + H2O = (6R)-10-formyltetrahydrofolate + H(+). Its pathway is one-carbon metabolism; tetrahydrofolate interconversion. Functionally, catalyzes the oxidation of 5,10-methylenetetrahydrofolate to 5,10-methenyltetrahydrofolate and then the hydrolysis of 5,10-methenyltetrahydrofolate to 10-formyltetrahydrofolate. The sequence is that of Bifunctional protein FolD from Neisseria meningitidis serogroup B (strain ATCC BAA-335 / MC58).